Consider the following 245-residue polypeptide: Putative insertion sequence ATP-binding protein y4pL (245 aa).

ATP is bound at residue 106–113 (GPSGVGKS).

Belongs to the IS21/IS1162 putative ATP-binding protein family.

The chain is Putative insertion sequence ATP-binding protein y4pL from Sinorhizobium fredii (strain NBRC 101917 / NGR234).